The sequence spans 863 residues: DNA mismatch repair protein MutS 2 (863 aa).

626 to 633 contacts ATP; the sequence is GPNMSGKS.

It belongs to the DNA mismatch repair MutS family.

Its function is as follows. This protein is involved in the repair of mismatches in DNA. It is possible that it carries out the mismatch recognition step. This protein has a weak ATPase activity. The polypeptide is DNA mismatch repair protein MutS 2 (mutS2) (Halobacterium salinarum (strain ATCC 700922 / JCM 11081 / NRC-1) (Halobacterium halobium)).